We begin with the raw amino-acid sequence, 514 residues long: 1-pyrroline-5-carboxylate dehydrogenase (514 aa).

Catalysis depends on residues Glu286 and Cys320.

Belongs to the aldehyde dehydrogenase family. RocA subfamily.

It catalyses the reaction L-glutamate 5-semialdehyde + NAD(+) + H2O = L-glutamate + NADH + 2 H(+). It functions in the pathway amino-acid degradation; L-proline degradation into L-glutamate; L-glutamate from L-proline: step 2/2. The protein is 1-pyrroline-5-carboxylate dehydrogenase of Staphylococcus aureus (strain MRSA252).